A 214-amino-acid chain; its full sequence is Redox-sensing transcriptional repressor Rex (214 aa).

The H-T-H motif DNA-binding region spans 16-55 (IYFRYLNVLKDANKQRVSSTELSEAVQVDSATIRRDFSYF). An NAD(+)-binding site is contributed by 90–95 (GVGSLG).

It belongs to the transcriptional regulatory Rex family. Homodimer.

The protein resides in the cytoplasm. Its function is as follows. Modulates transcription in response to changes in cellular NADH/NAD(+) redox state. The protein is Redox-sensing transcriptional repressor Rex of Limosilactobacillus reuteri (strain DSM 20016) (Lactobacillus reuteri).